The primary structure comprises 64 residues: Disintegrin CV-11-beta (64 aa).

The Disintegrin domain maps to 1 to 64 (NSAHPCCDPV…SDCPRNPWKD (64 aa)). Intrachain disulfides connect cysteine 6/cysteine 29, cysteine 20/cysteine 26, cysteine 25/cysteine 50, and cysteine 38/cysteine 57. The Cell attachment site signature appears at 42–44 (RGD).

It belongs to the disintegrin family. Dimeric disintegrin subfamily. As to quaternary structure, heterodimer with subunit alpha; disulfide-linked. As to expression, expressed by the venom gland.

The protein resides in the secreted. Its function is as follows. Inhibits ADP-induced human platelet aggregation. Antagonist of alpha-IIb/beta-3 (ITGA2B/ITGB3). This chain is Disintegrin CV-11-beta, found in Cerastes vipera (Sahara sand viper).